Consider the following 165-residue polypeptide: Phosphopantetheine adenylyltransferase (165 aa).

T10 is a substrate binding site. Residues 10 to 11 (TF) and H18 contribute to the ATP site. Substrate-binding residues include K42, L75, and R89. Residues 90–92 (GVR), E100, and 125–131 (YTYVAST) contribute to the ATP site.

This sequence belongs to the bacterial CoaD family. Homohexamer. The cofactor is Mg(2+).

It localises to the cytoplasm. The catalysed reaction is (R)-4'-phosphopantetheine + ATP + H(+) = 3'-dephospho-CoA + diphosphate. It participates in cofactor biosynthesis; coenzyme A biosynthesis; CoA from (R)-pantothenate: step 4/5. In terms of biological role, reversibly transfers an adenylyl group from ATP to 4'-phosphopantetheine, yielding dephospho-CoA (dPCoA) and pyrophosphate. This Chlorobaculum tepidum (strain ATCC 49652 / DSM 12025 / NBRC 103806 / TLS) (Chlorobium tepidum) protein is Phosphopantetheine adenylyltransferase.